A 561-amino-acid polypeptide reads, in one-letter code: MTTLKITGMTCDSCAAHVKEALEKVPGVQSALVSYPKGTAQLAIEAGTSSDALTTAVAGLGYEATLADAPPTDNRAGLLDKMRGWIGAADKPSGNERPLQVVVIGSGGAAMAAALKAVEQGAQVTLIERGTIGGTCVNVGCVPSKIMIRVAHIAHLRRESPFDGGMPPTSPTILRERLLAQQQARVEELRHAKYEGILDGNSAITVLHGEARFKDDQSLIVSLNEGGERVVMFDRCLVATGASPAVPPIPGLKESPYWTSTEALASDTIPERLAVIGSSVVALELAQAFARLGSKVTALARNTLFFREDPAIGEAVTAAFRAEGIEVLEHTQASQVAHMDGEFVLTTTHGELRADKLLVATGRTPNTRSLALEAAGVAVNAQGAIVIDKGMRTSSPNIYAAGDCTDQPQFVYVAAAAGTRAAINMTGGDAALDLTAMPAVVFTDPQVATVGYSEAEAHHDGIETDSRLLTLDNVPRALANFDTRGFIKLVIEEGSGRLIGVQAVAPEAGELIQTAVLAIRNRMTVQELADQLFPYLTMVEGLKLAAQTFSKDVKQLSCCAG.

The region spanning 1-65 (MTTLKITGMT…AVAGLGYEAT (65 aa)) is the HMA domain. A metal cation-binding residues include cysteine 11 and cysteine 14. FAD contacts are provided by alanine 110, glycine 130, and threonine 135. The cysteines at positions 136 and 141 are disulfide-linked. FAD contacts are provided by lysine 145, alanine 211, aspartate 403, and valine 411. Hg(2+)-binding residues include cysteine 558 and cysteine 559.

This sequence belongs to the class-I pyridine nucleotide-disulfide oxidoreductase family. As to quaternary structure, homodimer. It depends on FAD as a cofactor.

The enzyme catalyses Hg + NADP(+) + H(+) = Hg(2+) + NADPH. Functionally, resistance to Hg(2+) in bacteria appears to be governed by a specialized system which includes mercuric reductase. MerA protein is responsible for volatilizing mercury as Hg(0). The protein is Mercuric reductase (merA) of Enterobacter agglomerans (Erwinia herbicola).